The primary structure comprises 187 residues: Prepilin peptidase-dependent protein B (187 aa).

A propeptide spans 1 to 7 (leader sequence); sequence MPVKEQG. Residue phenylalanine 8 is modified to N-methylphenylalanine. A helical membrane pass occupies residues 8–28; that stretch reads FSLLEVLIAMAISSVLLLGAA.

Its subcellular location is the membrane. Functionally, not yet known. This chain is Prepilin peptidase-dependent protein B (ppdB), found in Escherichia coli (strain K12).